The following is a 763-amino-acid chain: Protein translocase subunit SecA 2 (763 aa).

ATP contacts are provided by residues Gln83, 101–105 (GEGKT), and Asp490.

It belongs to the SecA family. In terms of assembly, monomer and homodimer. Part of the essential Sec protein translocation apparatus which comprises SecA, SecYEG and auxiliary proteins SecDF. Other proteins may also be involved.

It is found in the cell membrane. Its subcellular location is the cytoplasm. It carries out the reaction ATP + H2O + cellular proteinSide 1 = ADP + phosphate + cellular proteinSide 2.. In terms of biological role, part of the Sec protein translocase complex. Interacts with the SecYEG preprotein conducting channel. Has a central role in coupling the hydrolysis of ATP to the transfer of proteins into and across the cell membrane, serving as an ATP-driven molecular motor driving the stepwise translocation of polypeptide chains across the membrane. This Corynebacterium efficiens (strain DSM 44549 / YS-314 / AJ 12310 / JCM 11189 / NBRC 100395) protein is Protein translocase subunit SecA 2.